A 114-amino-acid chain; its full sequence is T cell receptor beta variable 27 (114 aa).

Positions 1-21 (MGPQLLGYVVLCLLGAGPLEA) are cleaved as a signal peptide. The 93-residue stretch at 22–114 (QVTQNPRYLI…TSLYFCASSL (93 aa)) folds into the Ig-like domain. Cysteine 42 and cysteine 110 are disulfide-bonded. N-linked (GlcNAc...) asparagine glycosylation occurs at asparagine 103.

In terms of assembly, alpha-beta TR is a heterodimer composed of an alpha and beta chain; disulfide-linked. The alpha-beta TR is associated with the transmembrane signaling CD3 coreceptor proteins to form the TR-CD3 (TcR or TCR). The assembly of alpha-beta TR heterodimers with CD3 occurs in the endoplasmic reticulum where a single alpha-beta TR heterodimer associates with one CD3D-CD3E heterodimer, one CD3G-CD3E heterodimer and one CD247 homodimer forming a stable octameric structure. CD3D-CD3E and CD3G-CD3E heterodimers preferentially associate with TR alpha and TR beta chains, respectively. The association of the CD247 homodimer is the last step of TcR assembly in the endoplasmic reticulum and is required for transport to the cell surface.

The protein localises to the cell membrane. V region of the variable domain of T cell receptor (TR) beta chain that participates in the antigen recognition. Alpha-beta T cell receptors are antigen specific receptors which are essential to the immune response and are present on the cell surface of T lymphocytes. Recognize peptide-major histocompatibility (MH) (pMH) complexes that are displayed by antigen presenting cells (APC), a prerequisite for efficient T cell adaptive immunity against pathogens. Binding of alpha-beta TR to pMH complex initiates TR-CD3 clustering on the cell surface and intracellular activation of LCK that phosphorylates the ITAM motifs of CD3G, CD3D, CD3E and CD247 enabling the recruitment of ZAP70. In turn ZAP70 phosphorylates LAT, which recruits numerous signaling molecules to form the LAT signalosome. The LAT signalosome propagates signal branching to three major signaling pathways, the calcium, the mitogen-activated protein kinase (MAPK) kinase and the nuclear factor NF-kappa-B (NF-kB) pathways, leading to the mobilization of transcription factors that are critical for gene expression and essential for T cell growth and differentiation. The T cell repertoire is generated in the thymus, by V-(D)-J rearrangement. This repertoire is then shaped by intrathymic selection events to generate a peripheral T cell pool of self-MH restricted, non-autoaggressive T cells. Post-thymic interaction of alpha-beta TR with the pMH complexes shapes TR structural and functional avidity. This Homo sapiens (Human) protein is T cell receptor beta variable 27.